A 286-amino-acid polypeptide reads, in one-letter code: Shikimate dehydrogenase (NADP(+)) (286 aa).

Shikimate-binding positions include 20 to 22 (SLS) and threonine 67. The active-site Proton acceptor is the lysine 71. Residues asparagine 92 and aspartate 107 each coordinate shikimate. NADP(+) is bound by residues 132-136 (GAGGA) and methionine 228. Tyrosine 230 is a shikimate binding site. An NADP(+)-binding site is contributed by glycine 251.

This sequence belongs to the shikimate dehydrogenase family. In terms of assembly, homodimer.

The catalysed reaction is shikimate + NADP(+) = 3-dehydroshikimate + NADPH + H(+). It functions in the pathway metabolic intermediate biosynthesis; chorismate biosynthesis; chorismate from D-erythrose 4-phosphate and phosphoenolpyruvate: step 4/7. Its function is as follows. Involved in the biosynthesis of the chorismate, which leads to the biosynthesis of aromatic amino acids. Catalyzes the reversible NADPH linked reduction of 3-dehydroshikimate (DHSA) to yield shikimate (SA). The chain is Shikimate dehydrogenase (NADP(+)) from Geobacter metallireducens (strain ATCC 53774 / DSM 7210 / GS-15).